An 87-amino-acid chain; its full sequence is UPF0250 protein YE3006 (87 aa).

This sequence belongs to the UPF0250 family.

The protein is UPF0250 protein YE3006 of Yersinia enterocolitica serotype O:8 / biotype 1B (strain NCTC 13174 / 8081).